The chain runs to 509 residues: 2,3-bisphosphoglycerate-independent phosphoglycerate mutase (509 aa).

Mn(2+) contacts are provided by D12 and S62. The active-site Phosphoserine intermediate is the S62. Residues H123, 153–154 (RD), R185, R191, 260–263 (RPDR), and K333 each bind substrate. Residues D400, H404, D441, H442, and H460 each contribute to the Mn(2+) site.

Belongs to the BPG-independent phosphoglycerate mutase family. In terms of assembly, monomer. Mn(2+) serves as cofactor.

The enzyme catalyses (2R)-2-phosphoglycerate = (2R)-3-phosphoglycerate. It functions in the pathway carbohydrate degradation; glycolysis; pyruvate from D-glyceraldehyde 3-phosphate: step 3/5. In terms of biological role, catalyzes the interconversion of 2-phosphoglycerate and 3-phosphoglycerate. The protein is 2,3-bisphosphoglycerate-independent phosphoglycerate mutase of Clostridium botulinum (strain Langeland / NCTC 10281 / Type F).